The following is a 1284-amino-acid chain: ATP-dependent helicase fft2 (1284 aa).

Composition is skewed to polar residues over residues 1-10 (MLPYNSNYLS) and 20-57 (ENPQ…AMYG). 5 disordered regions span residues 1 to 57 (MLPY…AMYG), 185 to 252 (AQPP…LPPV), 317 to 339 (KQSP…QSQK), 353 to 388 (STQA…EEPE), and 446 to 465 (PDDV…KNPM). A compositionally biased stretch (low complexity) spans 201-241 (RSNSRSSARSTARSAPRSTQRSRSSSANPVTTPPVNNTLLT). 2 stretches are compositionally biased toward polar residues: residues 320-339 (PVAS…QSQK) and 353-372 (STQA…ASKK). Residue S323 is modified to Phosphoserine. Positions 376-388 (EEDEFYDSEEEPE) are enriched in acidic residues. S383 carries the phosphoserine modification. Residues 562 to 730 (HLLYQQKLSG…VSLLAFILPN (169 aa)) enclose the Helicase ATP-binding domain. 575–582 (DEMGLGKT) serves as a coordination point for ATP. Positions 681–684 (DEGH) match the DEGH box motif. The tract at residues 816 to 839 (QQLRRDDKRNKRSKNDEESDGKSL) is disordered. Basic and acidic residues predominate over residues 818–831 (LRRDDKRNKRSKND). The Helicase C-terminal domain maps to 928-1079 (VLKELLPKMK…SLSSDGKDRE (152 aa)). A disordered region spans residues 1088-1284 (DMLDEENNGN…SEVDNNAAKD (197 aa)). Residues 1095–1107 (NGNNTKPEITGNE) are compositionally biased toward polar residues. Residues 1143–1177 (EKTDLADGDEKANIKTEMKSETVEGDNKELRETMK) are compositionally biased toward basic and acidic residues. Over residues 1180-1194 (NVQTDSNAAVPSSKS) the composition is skewed to polar residues. 2 stretches are compositionally biased toward basic and acidic residues: residues 1243-1256 (QLEK…KKPD) and 1266-1284 (EEEK…AAKD).

It belongs to the SNF2/RAD54 helicase family.

It localises to the cytoplasm. The protein resides in the nucleus. The catalysed reaction is ATP + H2O = ADP + phosphate + H(+). Its function is as follows. DNA helicase that possesses intrinsic ATP-dependent nucleosome-remodeling activity and is required for heterochromatin organization. In Schizosaccharomyces pombe (strain 972 / ATCC 24843) (Fission yeast), this protein is ATP-dependent helicase fft2 (fft2).